A 947-amino-acid polypeptide reads, in one-letter code: Isoleucine--tRNA ligase (947 aa).

The 'HIGH' region signature appears at 57–67 (PYANGNIHLGH). Glu-568 serves as a coordination point for L-isoleucyl-5'-AMP. The 'KMSKS' region signature appears at 609–613 (KMSKS). Lys-612 contacts ATP. 4 residues coordinate Zn(2+): Cys-908, Cys-911, Cys-926, and Cys-929.

This sequence belongs to the class-I aminoacyl-tRNA synthetase family. IleS type 1 subfamily. In terms of assembly, monomer. Zn(2+) is required as a cofactor.

It is found in the cytoplasm. It catalyses the reaction tRNA(Ile) + L-isoleucine + ATP = L-isoleucyl-tRNA(Ile) + AMP + diphosphate. Its function is as follows. Catalyzes the attachment of isoleucine to tRNA(Ile). As IleRS can inadvertently accommodate and process structurally similar amino acids such as valine, to avoid such errors it has two additional distinct tRNA(Ile)-dependent editing activities. One activity is designated as 'pretransfer' editing and involves the hydrolysis of activated Val-AMP. The other activity is designated 'posttransfer' editing and involves deacylation of mischarged Val-tRNA(Ile). This Persephonella marina (strain DSM 14350 / EX-H1) protein is Isoleucine--tRNA ligase.